We begin with the raw amino-acid sequence, 423 residues long: Probable sodium/metabolite cotransporter BASS3, chloroplastic (423 aa).

A chloroplast-targeting transit peptide spans 1–45 (MAAAVAASSSSSSSSCAAVGVATASHPHRHRQARFVVSPPAPASP). Helical transmembrane passes span 106-126 (ALLPLVVAATAVAALGNPATF), 138-158 (LGGIMLSIGIKLSIDDFALAF), 165-187 (TIGYMAQYIVKPLMGVLIARAFG), 192-214 (FFAGFVLTCCVSGAQLSSYASFL), 231-251 (ISSVVVTPVLTGLLIGSVVPV), 254-274 (IAMAKSILQVVLVPVTLGLLL), 287-307 (PVMPFVAMLCTSLCIGSPLAI), 318-338 (FLLLLPIVTFHIAAFIVGYWI), and 380-400 (VPAACSVVIMAIFGLTLASYW).

The protein belongs to the bile acid:sodium symporter (BASS) (TC 2.A.28) family.

The protein localises to the membrane. Its subcellular location is the plastid. It is found in the chloroplast envelope. Its function is as follows. May function as sodium-coupled metabolite transporter across the chloroplast envelope. This chain is Probable sodium/metabolite cotransporter BASS3, chloroplastic (BASS3), found in Oryza sativa subsp. japonica (Rice).